Reading from the N-terminus, the 1205-residue chain is cGMP-specific 3',5'-cyclic phosphodiesterase (1205 aa).

The interval 1 to 153 (MTDVSSPAGG…TKASTTASQQ (153 aa)) is disordered. Residues 18-32 (TTSSSPAATTSASSS) are compositionally biased toward low complexity. The span at 33–48 (KPLTNGANKTTISTTA) shows a compositional bias: polar residues. The segment covering 62–71 (GAIPASSSSG) has biased composition (low complexity). A compositionally biased stretch (polar residues) spans 83-94 (SNNNRPAATNRS). Low complexity predominate over residues 118–140 (SSSSPSQSPSQTQASIQTQTSQQ). 2 GAF domains span residues 259–411 (DIDV…GIGI) and 443–624 (NLEC…GLGI). One can recognise a PDEase domain in the interval 654–1052 (SQDQTEKLTQ…RNWQDLAEKV (399 aa)). The active-site Proton donor is H730. A divalent metal cation-binding residues include H734, H770, D771, and D956. Disordered stretches follow at residues 1093-1122 (QQSQ…TGAL) and 1152-1205 (SHVS…CALL). Basic and acidic residues-rich tracts occupy residues 1098 to 1109 (GSEDSHTPEHQR) and 1152 to 1162 (SHVSEDMDDKS). The segment covering 1171 to 1191 (ASGSMGRMSASSSTSSAGGQM) has biased composition (low complexity). The span at 1195-1205 (SKKRSKLCALL) shows a compositional bias: basic residues. C1202 bears the Cysteine methyl ester mark. C1202 carries the S-farnesyl cysteine lipid modification. The propeptide at 1203–1205 (ALL) is removed in mature form.

It belongs to the cyclic nucleotide phosphodiesterase family. As to quaternary structure, interacts with PrBP. Requires a divalent metal cation as cofactor.

The protein localises to the cell membrane. It carries out the reaction 3',5'-cyclic GMP + H2O = GMP + H(+). Functionally, has a role regulating cGMP transport in Malpighian tubule principal cells. The protein is cGMP-specific 3',5'-cyclic phosphodiesterase of Drosophila sechellia (Fruit fly).